Here is a 328-residue protein sequence, read N- to C-terminus: Probable G-protein coupled receptor 82 (328 aa).

Topologically, residues 1 to 11 (MTNNSTCIQPS) are extracellular. N-linked (GlcNAc...) asparagine glycans are attached at residues asparagine 3 and asparagine 4. The helical transmembrane segment at 12-32 (VISTTALPVTYIFLFIIGLFG) threads the bilayer. Topologically, residues 33 to 55 (NSLAQWVFLTKIGKKTSTHIYLA) are cytoplasmic. A helical transmembrane segment spans residues 56-76 (NLVTANLLVCTAMPFMGIYFL). Topologically, residues 77–92 (RGFYWKYQSVQCRLVN) are extracellular. A helical membrane pass occupies residues 93-115 (FLGTLSMHVSMFVSLLILSWIAI). The Cytoplasmic segment spans residues 116–156 (SRYATLMKKESKQEATSCYERMFYGHVLKRFRQPNFARTMC). A helical membrane pass occupies residues 157–177 (IYIWGVVLVIIIPVTLYYSVV). Residues 178–197 (EATEEGQSQCYNRQMELGAR) are Extracellular-facing. Residues 198–218 (PSQIAGLIGTTFIGFSFLVVV) traverse the membrane as a helical segment. The Cytoplasmic segment spans residues 219–251 (TSYYSLVSHLRRVRTCTSITEKDLTYRSVKRHL). Residues 252-272 (LIIQVLLVVCFLPYSIFKPIF) traverse the membrane as a helical segment. Topologically, residues 273–328 (YVLHQREGDCQQLNYLIEAKNILTCLASARSSTDPIIFLLLDKTFKKTLYGLLTKS) are extracellular.

It belongs to the G-protein coupled receptor 1 family.

The protein localises to the cell membrane. Its function is as follows. Orphan receptor. This is Probable G-protein coupled receptor 82 (Gpr82) from Mus musculus (Mouse).